The following is a 220-amino-acid chain: MSFRDQPLGELALSIPRASALFRKYDMDYCCGGKQTLARAAARKELDVEAIEAELAQLAEQPIEKDWRTAPLAEIIDHIIVRYHDRHREQLPELILQATKVERVHADKPSVPKGLAKYLTMLHQELSSHMMKEEQILFPMIKQGMGSQAMGPISVMESEHDDAGELLEVIKHTTNNVTPPPEACTTWKAMYNGINEMIDDLMEHISLENNVLFPRALAGE.

The protein belongs to the RIC family. YtfE subfamily. As to quaternary structure, homodimer.

It localises to the cytoplasm. Its function is as follows. Di-iron-containing protein involved in the repair of iron-sulfur clusters damaged by oxidative and nitrosative stress conditions. This chain is Iron-sulfur cluster repair protein YtfE, found in Citrobacter koseri (strain ATCC BAA-895 / CDC 4225-83 / SGSC4696).